The sequence spans 608 residues: Serine/threonine-protein kinase BUR1 (608 aa).

The Protein kinase domain occupies 39 to 346 (YEIIQKLGQG…ALDALNHNYF (308 aa)). Residues 45–53 (LGQGTFGVV) and lysine 68 each bind ATP. Aspartate 174 functions as the Proton acceptor in the catalytic mechanism. Disordered regions lie at residues 383–419 (HEAN…LALP) and 443–571 (YIPK…FDED). Residues 400 to 411 (YNNSNNYPRNRN) show a composition bias toward low complexity. The segment covering 471-482 (LRDRSPRREGHI) has biased composition (basic and acidic residues). A compositionally biased stretch (low complexity) spans 487–502 (STTNSNNISSNSSASN). 2 stretches are compositionally biased toward polar residues: residues 503 to 512 (VGGTLSNPTH) and 539 to 548 (PQSSSRNVSD). The span at 559–571 (EQNESDLTDFDED) shows a compositional bias: acidic residues.

Belongs to the protein kinase superfamily. CMGC Ser/Thr protein kinase family. CDC2/CDKX subfamily.

Its subcellular location is the nucleus. It carries out the reaction L-seryl-[protein] + ATP = O-phospho-L-seryl-[protein] + ADP + H(+). It catalyses the reaction L-threonyl-[protein] + ATP = O-phospho-L-threonyl-[protein] + ADP + H(+). The enzyme catalyses [DNA-directed RNA polymerase] + ATP = phospho-[DNA-directed RNA polymerase] + ADP + H(+). In terms of biological role, serine/threonine-protein kinase involved in transcription regulation. Phosphorylates the UBC2/RAD6 ubiquitin-conjugating enzyme (E2), leading to monoubiquitination of histone H2B and the silencing of telomeric-associated genes. Also required for histone H3 methylation. Necessary for the recovery from pheromone-induced growth arrest in the cell cycle G1 phase. This is Serine/threonine-protein kinase BUR1 (BUR1) from Debaryomyces hansenii (strain ATCC 36239 / CBS 767 / BCRC 21394 / JCM 1990 / NBRC 0083 / IGC 2968) (Yeast).